Consider the following 368-residue polypeptide: MIGGEVSIKNVSKFFDDFQVLKNVSLDIKKGEFFSILGPSGCGKTTLLRVIAGFEGVESGDVLLDGKSILNLPPNKRPVNIIFQNYALFPHLTVFENIAFPLKLKKLSENEINQRVNELLSLIRMEEHAQKMPSQLSGGQKQRVAIARALANEPRVLLLDEPLSALDAKLRQELLVELDNLHDRVGITFIYVTHDQAEAISVSDRVALMNEGEIVQVGTPYEVYESPVNVFAATFIGETNLMKAEVVEVEDEYYVVESPGIGQFRCYRDKEAKKGDRLLITLRPEKIRISRKQFRSEETFNVFHGVVDEEIYMGHQTKYFVRLDEGYIMKVYKQHARYILDEPIIKWEDEVFITWNPDDSFIVEVLEE.

Positions 6-236 (VSIKNVSKFF…PVNVFAATFI (231 aa)) constitute an ABC transporter domain. 38-45 (GPSGCGKT) provides a ligand contact to ATP.

It belongs to the ABC transporter superfamily. Spermidine/putrescine importer (TC 3.A.1.11.1) family. As to quaternary structure, the complex is composed of two ATP-binding proteins (PotA), two transmembrane proteins (PotB and PotC) and a solute-binding protein (PotD).

The protein localises to the cell inner membrane. It carries out the reaction ATP + H2O + polyamine-[polyamine-binding protein]Side 1 = ADP + phosphate + polyamineSide 2 + [polyamine-binding protein]Side 1.. In terms of biological role, part of the ABC transporter complex PotABCD involved in spermidine/putrescine import. Responsible for energy coupling to the transport system. In Thermotoga maritima (strain ATCC 43589 / DSM 3109 / JCM 10099 / NBRC 100826 / MSB8), this protein is Spermidine/putrescine import ATP-binding protein PotA.